The sequence spans 429 residues: UPF0242 protein CT_616 (429 aa).

The protein belongs to the UPF0242 family.

The polypeptide is UPF0242 protein CT_616 (Chlamydia trachomatis serovar D (strain ATCC VR-885 / DSM 19411 / UW-3/Cx)).